The primary structure comprises 244 residues: Phosphoadenosine 5'-phosphosulfate reductase (244 aa).

Cys-239 functions as the Nucleophile; cysteine thiosulfonate intermediate in the catalytic mechanism.

The protein belongs to the PAPS reductase family. CysH subfamily.

The protein localises to the cytoplasm. It catalyses the reaction [thioredoxin]-disulfide + sulfite + adenosine 3',5'-bisphosphate + 2 H(+) = [thioredoxin]-dithiol + 3'-phosphoadenylyl sulfate. The protein operates within sulfur metabolism; hydrogen sulfide biosynthesis; sulfite from sulfate: step 3/3. Catalyzes the formation of sulfite from phosphoadenosine 5'-phosphosulfate (PAPS) using thioredoxin as an electron donor. The sequence is that of Phosphoadenosine 5'-phosphosulfate reductase from Salmonella paratyphi A (strain AKU_12601).